The following is a 120-amino-acid chain: Large ribosomal subunit protein bL20 (120 aa).

It belongs to the bacterial ribosomal protein bL20 family.

In terms of biological role, binds directly to 23S ribosomal RNA and is necessary for the in vitro assembly process of the 50S ribosomal subunit. It is not involved in the protein synthesizing functions of that subunit. The polypeptide is Large ribosomal subunit protein bL20 (Mesoplasma florum (strain ATCC 33453 / NBRC 100688 / NCTC 11704 / L1) (Acholeplasma florum)).